Here is a 374-residue protein sequence, read N- to C-terminus: MLNRPSSPDGGEAHAWPPDPEIPVFANAEHAHRRPLRWMFALVAVALSCLLATGIWRSRAAPPHAATQTVAPAGQALPPGRIFTVHPREPEPAPLPDMPAAPDPILPQPRPAPPVPPPPIRAPYDYDEPAPRRDSAALKSGPAMMVATAARLGQTERAGMADDGVSADAATLIGRNVSRATRSGGRDYRLLPGTFIDCILQTRIVTNVPGLTTCIVSRDVYSASGKRVLVPRGTTVVGEYRADLAQGSQRIYVAWSRLFMPSGLTIELASPAVDGTGAAGLPGVVDDKFAQRFGGALLLSVLGDATSYMLARATDARHGVNVNLTAAGTMNSLAASALNNTINIPPTLYKNHGDQIGILVARPLDFSILRGTNE.

The chain crosses the membrane as a helical span at residues 38–56 (WMFALVAVALSCLLATGIW). The disordered stretch occupies residues 86–117 (HPREPEPAPLPDMPAAPDPILPQPRPAPPVPP). Pro residues predominate over residues 92–117 (PAPLPDMPAAPDPILPQPRPAPPVPP).

It belongs to the TrbI/VirB10 family.

It is found in the cell membrane. Its function is as follows. Component of the type IV secretion system ptl required for secretion of assembled pertussis toxin (PTX) through the outer membrane. The protein is Type IV secretion system protein PtlG (ptlG) of Bordetella pertussis (strain Tohama I / ATCC BAA-589 / NCTC 13251).